A 412-amino-acid chain; its full sequence is DNA replication and repair protein RecF (412 aa).

Glycine 30 to threonine 37 is a binding site for ATP.

Belongs to the RecF family.

It is found in the cytoplasm. Functionally, the RecF protein is involved in DNA metabolism; it is required for DNA replication and normal SOS inducibility. RecF binds preferentially to single-stranded, linear DNA. It also seems to bind ATP. The sequence is that of DNA replication and repair protein RecF from Bifidobacterium longum subsp. infantis (strain ATCC 15697 / DSM 20088 / JCM 1222 / NCTC 11817 / S12).